The sequence spans 322 residues: tRNA-dihydrouridine synthase B (322 aa).

FMN contacts are provided by residues 16–18 (PMA) and Q70. The Proton donor role is filled by C100. Residues K139, 200 to 202 (NGD), and 224 to 225 (GR) contribute to the FMN site.

This sequence belongs to the Dus family. DusB subfamily. FMN serves as cofactor.

The catalysed reaction is a 5,6-dihydrouridine in tRNA + NAD(+) = a uridine in tRNA + NADH + H(+). It catalyses the reaction a 5,6-dihydrouridine in tRNA + NADP(+) = a uridine in tRNA + NADPH + H(+). Catalyzes the synthesis of 5,6-dihydrouridine (D), a modified base found in the D-loop of most tRNAs, via the reduction of the C5-C6 double bond in target uridines. This is tRNA-dihydrouridine synthase B from Vibrio vulnificus (strain CMCP6).